The following is a 280-amino-acid chain: UDP-3-O-acyl-N-acetylglucosamine deacetylase (280 aa).

Zn(2+) is bound by residues His79, His237, and Asp241. His264 serves as the catalytic Proton donor.

It belongs to the LpxC family. Requires Zn(2+) as cofactor.

The enzyme catalyses a UDP-3-O-[(3R)-3-hydroxyacyl]-N-acetyl-alpha-D-glucosamine + H2O = a UDP-3-O-[(3R)-3-hydroxyacyl]-alpha-D-glucosamine + acetate. The protein operates within glycolipid biosynthesis; lipid IV(A) biosynthesis; lipid IV(A) from (3R)-3-hydroxytetradecanoyl-[acyl-carrier-protein] and UDP-N-acetyl-alpha-D-glucosamine: step 2/6. In terms of biological role, catalyzes the hydrolysis of UDP-3-O-myristoyl-N-acetylglucosamine to form UDP-3-O-myristoylglucosamine and acetate, the committed step in lipid A biosynthesis. The sequence is that of UDP-3-O-acyl-N-acetylglucosamine deacetylase from Chlamydia abortus (strain DSM 27085 / S26/3) (Chlamydophila abortus).